We begin with the raw amino-acid sequence, 370 residues long: Dual-specificity RNA methyltransferase RlmN (370 aa).

The Proton acceptor role is filled by Glu-93. The Radical SAM core domain occupies 99–337; sequence AEGRGTLCVS…VTTVRKTRGD (239 aa). Cys-106 and Cys-343 are disulfide-bonded. Residues Cys-113, Cys-117, and Cys-120 each contribute to the [4Fe-4S] cluster site. S-adenosyl-L-methionine-binding positions include 167-168, Ser-199, 221-223, and Asn-300; these read GE and SLH. Residue Cys-343 is the S-methylcysteine intermediate of the active site.

This sequence belongs to the radical SAM superfamily. RlmN family. [4Fe-4S] cluster is required as a cofactor.

The protein localises to the cytoplasm. It carries out the reaction adenosine(2503) in 23S rRNA + 2 reduced [2Fe-2S]-[ferredoxin] + 2 S-adenosyl-L-methionine = 2-methyladenosine(2503) in 23S rRNA + 5'-deoxyadenosine + L-methionine + 2 oxidized [2Fe-2S]-[ferredoxin] + S-adenosyl-L-homocysteine. The catalysed reaction is adenosine(37) in tRNA + 2 reduced [2Fe-2S]-[ferredoxin] + 2 S-adenosyl-L-methionine = 2-methyladenosine(37) in tRNA + 5'-deoxyadenosine + L-methionine + 2 oxidized [2Fe-2S]-[ferredoxin] + S-adenosyl-L-homocysteine. In terms of biological role, specifically methylates position 2 of adenine 2503 in 23S rRNA and position 2 of adenine 37 in tRNAs. m2A2503 modification seems to play a crucial role in the proofreading step occurring at the peptidyl transferase center and thus would serve to optimize ribosomal fidelity. The sequence is that of Dual-specificity RNA methyltransferase RlmN from Francisella tularensis subsp. tularensis (strain FSC 198).